A 284-amino-acid polypeptide reads, in one-letter code: S-formylglutathione hydrolase (284 aa).

Ala-2 carries the post-translational modification N-acetylalanine. Substrate contacts are provided by Asn-63 and Lys-67. Active-site charge relay system residues include Ser-152, Asp-229, and His-262.

Belongs to the esterase D family. Homodimer.

It catalyses the reaction S-formylglutathione + H2O = formate + glutathione + H(+). Activity toward p-nitrophenyl acetate inhibited by N-ethylmaleimide, 10-(fluoroethoxyphosphinyl)-N-(biotinamidopentyl)decanamide (FP-biotin), iodoacetamide, CuCl(2) and ZnSO(4), but not by phenylmethylsulfonyl fluoride, EDTA, Mg(2+), Mn(2+), Ca(2+) or paraoxon, an organo-phosphate inhibitor of serine hydrolases. Serine hydrolase which catalyzes the hydrolysis of S-formylglutathione to glutathione and formic acid. Also hydrolyzes S-acetylglutathione and a range of carboxyesters in vitro. Involved in the detoxification of formaldehyde. The sequence is that of S-formylglutathione hydrolase (SFGH) from Arabidopsis thaliana (Mouse-ear cress).